Here is a 422-residue protein sequence, read N- to C-terminus: UDP-N-acetylglucosamine 1-carboxyvinyltransferase (422 aa).

Position 22-23 (22-23 (KN)) interacts with phosphoenolpyruvate. R95 lines the UDP-N-acetyl-alpha-D-glucosamine pocket. The active-site Proton donor is C119. C119 is modified (2-(S-cysteinyl)pyruvic acid O-phosphothioketal). Residues 124–128 (RPIDQ), D309, and V331 contribute to the UDP-N-acetyl-alpha-D-glucosamine site.

The protein belongs to the EPSP synthase family. MurA subfamily.

The protein resides in the cytoplasm. It carries out the reaction phosphoenolpyruvate + UDP-N-acetyl-alpha-D-glucosamine = UDP-N-acetyl-3-O-(1-carboxyvinyl)-alpha-D-glucosamine + phosphate. It participates in cell wall biogenesis; peptidoglycan biosynthesis. In terms of biological role, cell wall formation. Adds enolpyruvyl to UDP-N-acetylglucosamine. In Anaeromyxobacter dehalogenans (strain 2CP-C), this protein is UDP-N-acetylglucosamine 1-carboxyvinyltransferase.